We begin with the raw amino-acid sequence, 749 residues long: Protein SWAP (749 aa).

Residues 8–124 (SNVHVQEYKD…RNDQRNAIGF (117 aa)) form a dry CEEERYL region. A compositionally biased stretch (basic and acidic residues) spans 105 to 118 (EQEKEEEEKRRNDQ). The segment at 105–149 (EQEKEEEEKRRNDQRNAIGFDYGTGKVKARESDSEDEPFEPPEGI) is disordered. The stretch at 166–209 (IIEKTASFIVANGTQMEIVIKAKQRNNAEQFGFLEFDHRLNPFY) is one SURP motif 1 repeat. The tract at residues 256 to 310 (HGSDSEDSDSDYELHPSLLSGGAKRPVTPEKPGAIGPRKKPVEPEKPPDFTLKPV) is disordered. The SURP motif 2 repeat unit spans residues 391–431 (ILNSYAEHVAQRGLEAEASLAAREDLQLHFMEPKSPYYSYY). Residues 458 to 478 (PAPPSAVSSPGPSSLMSLNLS) are compositionally biased toward low complexity. Disordered stretches follow at residues 458 to 498 (PAPP…SSRL), 537 to 592 (LRND…QVDR), and 608 to 749 (KAKK…DRRR). A compositionally biased stretch (basic and acidic residues) spans 538–552 (RNDEPRDESSFRFDP). Residues 560–569 (PSDTTANFSD) are compositionally biased toward polar residues. Pro residues predominate over residues 574-583 (FPPPTPPVIP). 2 stretches are compositionally biased toward basic and acidic residues: residues 608 to 659 (KAKK…RSLD) and 679 to 689 (EEMKRTDEDRE). Composition is skewed to basic residues over residues 690–704 (RKRHRKRSRSRRRSR) and 714–749 (EHKKSRKSGRHHRSRSRSSSRDRHRRNRSRSRDRRR).

Its function is as follows. It is a regulator of pre-mRNA splicing (and, possibly, of other RNA processing events). It may regulate its own expression at the level of RNA processing. This chain is Protein SWAP (swp-1), found in Caenorhabditis elegans.